The sequence spans 428 residues: Cholecystokinin receptor type A (428 aa).

At 1-41 (MEVADSLLGNGSDVPPPCELGLENETLVCLEQPRAAKEWQP) the chain is on the extracellular side. Residues Asn-10 and Asn-24 are each glycosylated (N-linked (GlcNAc...) asparagine). A disulfide bond links Cys-18 and Cys-29. Residues 42-67 (AVQILLYSLIFLLSVLGNTLVITVLI) form a helical membrane-spanning segment. At 68–77 (RNKRMRTVTN) the chain is on the cytoplasmic side. The helical transmembrane segment at 78-104 (IFLLSLAVSDLMLCLFCMPFNLIPNLL) threads the bilayer. Topologically, residues 105–115 (KDFIFGSAVCK) are extracellular. Cys-114 and Cys-196 are joined by a disulfide. Residues 116 to 137 (TTTYFMGTSVSVSTFNLVAISL) form a helical membrane-spanning segment. The Cytoplasmic portion of the chain corresponds to 138–157 (ERYGAICKPLQSRVWQTKSH). The helical transmembrane segment at 158–178 (ALKVIATTWCLSFTIMTPYPI) threads the bilayer. At 179–210 (YSNLVPFTKTNNQTANMCRFLLPNDVMQQSWH) the chain is on the extracellular side. Asn-190 carries N-linked (GlcNAc...) asparagine glycosylation. The helical transmembrane segment at 211 to 234 (TFLLLILFLIPGIVMMVAYGLISL) threads the bilayer. The Cytoplasmic portion of the chain corresponds to 235–313 (ELYQGIKFDA…NLMAKKRVIR (79 aa)). The tract at residues 250-269 (ARDRNPSTGSSGRYEDGDGC) is disordered. The chain crosses the membrane as a helical span at residues 314–334 (MLMVIVVLFFLCWMPIFSANA). Residues 335–349 (WRAYDTASAERRLSG) lie on the Extracellular side of the membrane. A helical membrane pass occupies residues 350–373 (TPISFILLLSYTSSCVNPIIYCFM). Residues 374 to 428 (NKRFRLGFLATFPCCPHPGPPGPRGEVGEEEEGRTTGASLSRYSYSHMSASAPGP) are Cytoplasmic-facing. The S-palmitoyl cysteine moiety is linked to residue Cys-387. The tract at residues 393-428 (PPGPRGEVGEEEEGRTTGASLSRYSYSHMSASAPGP) is disordered. Over residues 409-422 (TGASLSRYSYSHMS) the composition is skewed to polar residues.

This sequence belongs to the G-protein coupled receptor 1 family.

The protein resides in the cell membrane. In terms of biological role, receptor for cholecystokinin. Mediates pancreatic growth and enzyme secretion, smooth muscle contraction of the gall bladder and stomach. Has a 1000-fold higher affinity for CCK rather than for gastrin. It modulates feeding and dopamine-induced behavior in the central and peripheral nervous system. This receptor mediates its action by association with G proteins that activate a phosphatidylinositol-calcium second messenger system. The protein is Cholecystokinin receptor type A (CCKAR) of Canis lupus familiaris (Dog).